The chain runs to 508 residues: Photosystem II CP47 reaction center protein (508 aa).

6 consecutive transmembrane segments (helical) span residues 21–36, 101–115, 140–156, 203–218, 237–252, and 457–472; these read AVHIMHTALVSGWAGS, IILSGLLFLAAIWHW, GIHLFLSGLLCFGFGAF, IAAGILGILAGLFHLS, VLSSSIAAVFFAAFIV, and CFALLFFFGHIWHGAR.

It belongs to the PsbB/PsbC family. PsbB subfamily. As to quaternary structure, PSII is composed of 1 copy each of membrane proteins PsbA, PsbB, PsbC, PsbD, PsbE, PsbF, PsbH, PsbI, PsbJ, PsbK, PsbL, PsbM, PsbT, PsbX, PsbY, PsbZ, Psb30/Ycf12, at least 3 peripheral proteins of the oxygen-evolving complex and a large number of cofactors. It forms dimeric complexes. Binds multiple chlorophylls. PSII binds additional chlorophylls, carotenoids and specific lipids. is required as a cofactor.

Its subcellular location is the plastid. The protein localises to the chloroplast thylakoid membrane. Its function is as follows. One of the components of the core complex of photosystem II (PSII). It binds chlorophyll and helps catalyze the primary light-induced photochemical processes of PSII. PSII is a light-driven water:plastoquinone oxidoreductase, using light energy to abstract electrons from H(2)O, generating O(2) and a proton gradient subsequently used for ATP formation. This Chara vulgaris (Common stonewort) protein is Photosystem II CP47 reaction center protein.